Consider the following 151-residue polypeptide: Glutamate mutase sigma subunit 1 (151 aa).

The B12-binding domain occupies 7 to 140 (PRTVILGVIG…EMLREDLQLT (134 aa)). Adenosylcob(III)alamin is bound by residues 17-21 (SDAHV), His20, 65-67 (SSL), and 96-100 (NLAVG).

Belongs to the methylaspartate mutase GlmS subunit family. In terms of assembly, heterotetramer composed of 2 epsilon subunits (GlmE) and 2 sigma subunits (GlmS). GlmE exists as a homodimer and GlmS as a monomer. It depends on adenosylcob(III)alamin as a cofactor.

The enzyme catalyses (2S,3S)-3-methyl-L-aspartate = L-glutamate. It functions in the pathway amino-acid degradation; L-glutamate degradation via mesaconate pathway; acetate and pyruvate from L-glutamate: step 1/4. Its function is as follows. Catalyzes the carbon skeleton rearrangement of L-glutamate to L-threo-3-methylaspartate ((2S,3S)-3-methylaspartate). The chain is Glutamate mutase sigma subunit 1 from Haloarcula marismortui (strain ATCC 43049 / DSM 3752 / JCM 8966 / VKM B-1809) (Halobacterium marismortui).